We begin with the raw amino-acid sequence, 156 residues long: Large ribosomal subunit protein uL15 (156 aa).

Residues 29–48 (CGKGKTSGRGHKGQKARSGV) form a disordered region. A compositionally biased stretch (basic residues) spans 34–43 (TSGRGHKGQK).

This sequence belongs to the universal ribosomal protein uL15 family. As to quaternary structure, part of the 50S ribosomal subunit.

Functionally, binds to the 23S rRNA. This Ehrlichia chaffeensis (strain ATCC CRL-10679 / Arkansas) protein is Large ribosomal subunit protein uL15.